Consider the following 253-residue polypeptide: Decarboxylase DEC1 (253 aa).

Lys121 (schiff-base intermediate with acetoacetate) is an active-site residue.

The protein belongs to the ADC family.

The protein operates within mycotoxin biosynthesis. Functionally, decarboxylase; part of the Tox1B locus, one of the 2 loci that mediate the biosynthesis of T-toxin, a family of linear polyketides 37 to 45 carbons in length, of which the major component is 41 carbons, and which leads to high virulence to maize. One of the PKSs (PKS1 or PKS2) could synthesize a precursor, used subsequently by the other PKS as starter unit, to add additional carbons. Variability in the length of the final carbon backbone C35-47 could be achieved by varying the number of condensation cycles, or use of different starter or extender units or might be due to decarboxylation of the penultimate product, catalyzed by DEC1. Additional proteins are required for the biosynthesis of T-toxin, including oxidoreductases RED1, RED2, RED3, LAM1 and OXI1, as well as esterase TOX9. The sequence is that of Decarboxylase DEC1 from Cochliobolus heterostrophus (strain C4 / ATCC 48331 / race T) (Southern corn leaf blight fungus).